A 1427-amino-acid polypeptide reads, in one-letter code: Multidrug resistance-associated protein 5 (1427 aa).

Residues 1–147 (MPSDSEEVCL…IYRFISTRLW (147 aa)) are Cytoplasmic-facing. A helical transmembrane segment spans residues 148-168 (FSCAVFFFCLIFGFIGPTCFI). The region spanning 151 to 432 (AVFFFCLIFG…IPYGSRYLAE (282 aa)) is the ABC transmembrane type-1 1 domain. Residues 169–185 (RRLIAFAENPERDEQSR) lie on the Extracellular side of the membrane. A helical membrane pass occupies residues 186-206 (IVYSYGIALVAAISVVEFARV). Topologically, residues 207 to 268 (LSYGATWAVS…RLFDAVTFAP (62 aa)) are cytoplasmic. Residues 269-289 (LVLVGPLVLVGGIGYLLMVIG) traverse the membrane as a helical segment. Arg290 is a topological domain (extracellular). The helical transmembrane segment at 291 to 311 (WSLLGILVFFVFDVIQFGLGK) threads the bilayer. Topologically, residues 312-375 (SMVACRNLAI…RKSGYAQSLA (64 aa)) are cytoplasmic. The chain crosses the membrane as a helical span at residues 376–396 (IACGPVVPVVAAILTFVGVVL). Over 397-399 (AGN) the chain is Extracellular. The chain crosses the membrane as a helical span at residues 400-420 (DLLASDAFSAITVYFVMLFGI). The Cytoplasmic segment spans residues 421–770 (RMIPYGSRYL…TIAWRIYKQY (350 aa)). Positions 486-707 (PTENEVIVVE…NDAYKTFVDA (222 aa)) constitute an ABC transporter 1 domain. Residue 518–525 (GAVGCGKS) coordinates ATP. The helical transmembrane segment at 771 to 791 (IHAAGGWPIWTCLVIGFIVNV) threads the bilayer. Positions 783–1078 (LVIGFIVNVV…AVRTQTELEA (296 aa)) constitute an ABC transmembrane type-1 2 domain. Residues 792–833 (VSNIFSTYWLSRWLKKGHDETTTITNGTEFLEMKTSLADSPV) are Extracellular-facing. N-linked (GlcNAc...) asparagine glycosylation is present at Asn817. Residues 834-854 (TGFYAAVYLVALVVLTISGLF) traverse the membrane as a helical segment. The Cytoplasmic portion of the chain corresponds to 855 to 909 (KACVFVKVSLTAATRLHDRMFQAVIHGATSFFDSTPTGRILNRFSKDMDEIDVKL). A helical transmembrane segment spans residues 910–930 (PFTAEVFLQNMITCLGFLVVI). A topological domain (extracellular) is located at residue Thr931. Residues 932–952 (SVFPYFLLFAIPLFVVFVVFV) traverse the membrane as a helical segment. Over 953-1022 (SCFRAGIRNL…MFQSAMRWLA (70 aa)) the chain is Cytoplasmic. The helical transmembrane segment at 1023-1043 (VWLDLLVVVMTAIVALLTVML) threads the bilayer. Over 1044–1049 (TGTVSP) the chain is Extracellular. A helical transmembrane segment spans residues 1050 to 1070 (ADAGMAIAFAVQMSGIFQFAV). The Cytoplasmic segment spans residues 1071-1427 (RTQTELEAKM…SSDTDIEVVQ (357 aa)). The ABC transporter 2 domain occupies 1117 to 1351 (INFSEVNLRY…DWSVYKLEDK (235 aa)). Residue 1151–1158 (GRTGSGKS) participates in ATP binding. The tract at residues 1361 to 1427 (VGENSEHSME…SSDTDIEVVQ (67 aa)) is disordered. Basic and acidic residues predominate over residues 1382-1418 (DIVKVENEQKDSSDDVVHIESGDDDVKADSSEVKETS).

The protein belongs to the ABC transporter superfamily. ABCC family. Conjugate transporter (TC 3.A.1.208) subfamily. As to expression, highly expressed in the intestine and pharynx. Expressed at low levels in the hypodermis and in some neurons.

The protein resides in the basolateral cell membrane. In terms of biological role, heme transporter required for the export of intestinal heme to different tissues and subcellular compartments. Also, required for the export of vitamin B12 from the intestine of the mother to the embryo to support embryonic development. The polypeptide is Multidrug resistance-associated protein 5 (Caenorhabditis elegans).